The primary structure comprises 219 residues: Ribose-5-phosphate isomerase A (219 aa).

Substrate-binding positions include 28–31, 81–84, and 94–97; these read SGST, DGAD, and KGGG. The active-site Proton acceptor is Glu-103. Residue Lys-121 coordinates substrate.

This sequence belongs to the ribose 5-phosphate isomerase family. Homodimer.

It carries out the reaction aldehydo-D-ribose 5-phosphate = D-ribulose 5-phosphate. It functions in the pathway carbohydrate degradation; pentose phosphate pathway; D-ribose 5-phosphate from D-ribulose 5-phosphate (non-oxidative stage): step 1/1. In terms of biological role, catalyzes the reversible conversion of ribose-5-phosphate to ribulose 5-phosphate. This chain is Ribose-5-phosphate isomerase A, found in Histophilus somni (strain 129Pt) (Haemophilus somnus).